Consider the following 479-residue polypeptide: PRAME family member 18 (479 aa).

One copy of the LRR 1 repeat lies at 15–38; it reads QSLLRDQALAISVLDELPRELFPP. Residues 97–124 form an LRR 1; degenerate repeat; sequence RWKLQVLEMRDVDENFWTIWSGARLLSC. An LRR 2; degenerate repeat occupies 179–203; it reads HLCCTKVVNYSMSILNFRNILETVY. One copy of the LRR 3; degenerate repeat lies at 204 to 230; it reads PDSIQVLEIWNMCWLCMIVEFSRYLSQ. An LRR 4; degenerate repeat occupies 231 to 265; sequence MRNLRKLFISDGCRYLLSSDSQEQLVAEFSSVLLR. 5 LRR repeats span residues 266–291, 292–323, 324–342, 348–375, and 376–400; these read LENL…IRCL, RSPL…SQLK, QLNL…PLRA, AATL…ALSR, and CSNL…LLRH.

The protein belongs to the PRAME family.

This is PRAME family member 18 from Homo sapiens (Human).